Consider the following 129-residue polypeptide: MYERIRFTEYLDLDLNDEHWYCHDCGTKLISARESYKKGCLVAERRPHEIHNPVIEGEYSFAPDENWVRILEFYCPGCTRQIETEYLPPGHPITVDIEVDIDSLKARLKKGVIVIKDGKLTKPEAEVLA.

As to quaternary structure, acetophenone carboxylase consists of five subunits; a heterooctameric subcomplex of two alpha (Apc1), two beta (Apc2), two gamma (Apc3) and two delta (Apc4) subunits assembles with the epsilon (Apc5) subunit in an unknown stoichiometry. It depends on Mg(2+) as a cofactor. Requires Mn(2+) as cofactor.

The protein resides in the cytoplasm. The catalysed reaction is acetophenone + hydrogencarbonate + 2 ATP + H2O = 3-oxo-3-phenylpropanoate + 2 ADP + 2 phosphate + 2 H(+). Inhibited by zinc ions, carbamoylphosphate and beta,gamma-imido-ATP. Functionally, catalyzes the carboxylation of acetophenone to form 3-oxo-3-phenylpropanoate (benzoylacetate) in the anaerobic catabolism of ethylbenzene. Also carboxylates propiophenone at the same rate and 4-acetyl-pyridine at lower rates. The polypeptide is Acetophenone carboxylase beta subunit (apc2) (Aromatoleum aromaticum (strain DSM 19018 / LMG 30748 / EbN1) (Azoarcus sp. (strain EbN1))).